Consider the following 95-residue polypeptide: Aspartyl/glutamyl-tRNA(Asn/Gln) amidotransferase subunit C (95 aa).

The protein belongs to the GatC family. In terms of assembly, heterotrimer of A, B and C subunits.

It carries out the reaction L-glutamyl-tRNA(Gln) + L-glutamine + ATP + H2O = L-glutaminyl-tRNA(Gln) + L-glutamate + ADP + phosphate + H(+). The catalysed reaction is L-aspartyl-tRNA(Asn) + L-glutamine + ATP + H2O = L-asparaginyl-tRNA(Asn) + L-glutamate + ADP + phosphate + 2 H(+). Allows the formation of correctly charged Asn-tRNA(Asn) or Gln-tRNA(Gln) through the transamidation of misacylated Asp-tRNA(Asn) or Glu-tRNA(Gln) in organisms which lack either or both of asparaginyl-tRNA or glutaminyl-tRNA synthetases. The reaction takes place in the presence of glutamine and ATP through an activated phospho-Asp-tRNA(Asn) or phospho-Glu-tRNA(Gln). The chain is Aspartyl/glutamyl-tRNA(Asn/Gln) amidotransferase subunit C from Trichlorobacter lovleyi (strain ATCC BAA-1151 / DSM 17278 / SZ) (Geobacter lovleyi).